The sequence spans 23 residues: Dahlein-4.3 (23 aa).

As to expression, expressed by the skin dorsal glands.

The protein localises to the secreted. Functionally, has no antimicrobial activity. In Ranoidea dahlii (Dahl's aquatic frog), this protein is Dahlein-4.3.